The following is a 548-amino-acid chain: T-complex protein 1 subunit theta (548 aa).

Ala-2 is modified (N-acetylalanine). The ADP site is built by Tyr-47 and Gly-48. Asp-99 contributes to the Mg(2+) binding site. ADP contacts are provided by Gly-100, Thr-101, Asn-102, Phe-103, Met-169, Ser-170, Lys-171, Gly-412, and Asp-499. ATP-binding residues include Gly-100, Thr-101, and Asn-102. Residues Ser-170, Lys-171, Gly-412, Asp-499, and Lys-504 each coordinate ATP. A Phosphotyrosine modification is found at Tyr-505. Positions 529–548 (PAGGPKPPSGKKDWDEDQND) are disordered.

Component of the chaperonin-containing T-complex (TRiC), a hexadecamer composed of two identical back-to-back stacked rings enclosing a protein folding chamber. Each ring is made up of eight different subunits: TCP1/CCT1, CCT2, CCT3, CCT4, CCT5, CCT6A/CCT6, CCT7, CCT8.

It is found in the cytoplasm. Its subcellular location is the cytoskeleton. It localises to the microtubule organizing center. The protein resides in the centrosome. The protein localises to the cilium basal body. It carries out the reaction ATP + H2O = ADP + phosphate + H(+). Its function is as follows. Component of the chaperonin-containing T-complex (TRiC), a molecular chaperone complex that assists the folding of actin, tubulin and other proteins upon ATP hydrolysis. The chain is T-complex protein 1 subunit theta from Gallus gallus (Chicken).